Here is a 51-residue protein sequence, read N- to C-terminus: Mitochondrial import receptor subunit TOM5 homolog (51 aa).

The residue at position 1 (Met1) is an N-acetylmethionine. Lys10 participates in a covalent cross-link: Glycyl lysine isopeptide (Lys-Gly) (interchain with G-Cter in SUMO2). Residues 27-45 (SIRNFLIYVALLRVTPYIL) form a helical membrane-spanning segment.

This sequence belongs to the Tom5 family. As to quaternary structure, forms part of the preprotein translocase complex of the outer mitochondrial membrane (TOM complex) which consists of at least 7 different proteins (TOMM5, TOMM6, TOMM7, TOMM20, TOMM22, TOMM40 and TOMM70).

The protein resides in the mitochondrion outer membrane. The polypeptide is Mitochondrial import receptor subunit TOM5 homolog (Mus musculus (Mouse)).